We begin with the raw amino-acid sequence, 317 residues long: Probable cell division protein WhiA (317 aa).

The H-T-H motif DNA-binding region spans 281–314 (SLKELGKMLEPPVGKSGVNHRLRKIEKIAEELRK).

It belongs to the WhiA family.

Its function is as follows. Involved in cell division and chromosome segregation. This is Probable cell division protein WhiA from Clostridium acetobutylicum (strain ATCC 824 / DSM 792 / JCM 1419 / IAM 19013 / LMG 5710 / NBRC 13948 / NRRL B-527 / VKM B-1787 / 2291 / W).